The chain runs to 1602 residues: MAP kinase-activating death domain protein (1602 aa).

The 255-residue stretch at 13 to 267 (YLVIVGARHP…VPVSGQKRVD (255 aa)) folds into the uDENN domain. Over residues 105 to 121 (PKEKAEGGAGPRGKEGA) the composition is skewed to basic and acidic residues. The interval 105–167 (PKEKAEGGAG…GKRRAKAGNR (63 aa)) is disordered. Positions 126–137 (ASEEAATESSES) are enriched in low complexity. Residues 138–156 (GSTLQPPSADSTPDVNQSP) show a composition bias toward polar residues. Residue S155 is modified to Phosphoserine. The span at 157-166 (RGKRRAKAGN) shows a compositional bias: basic residues. A cDENN domain is found at 288 to 428 (RFTLVDFPLH…ESLELKKHLK (141 aa)). One can recognise a dDENN domain in the interval 430 to 564 (ALASMSLNTQ…LNPSNYAFQR (135 aa)). Disordered stretches follow at residues 603 to 635 (ALSV…SSYS) and 676 to 840 (QPQK…NSTE). Over residues 614–629 (SDPTDDSGSDSMDYDD) the composition is skewed to acidic residues. Phosphoserine occurs at positions 688 and 691. The span at 688 to 698 (SENSQENLPLR) shows a compositional bias: polar residues. The span at 699–711 (SSSSTTASSSPST) shows a compositional bias: low complexity. The residue at position 778 (S778) is a Phosphoserine. Positions 789–803 (ESYTPRFSQHASGSR) are enriched in polar residues. A phosphoserine mark is found at S812, S817, and S819. Residues 826–839 (RASSPNSTVSNNST) are compositionally biased toward low complexity. A phosphoserine mark is found at S857, S861, S895, S900, and S909. 3 disordered regions span residues 870 to 920 (KGAR…SSEN), 1030 to 1089 (KEPD…DTRS), and 1113 to 1231 (TEEK…RSSE). A compositionally biased stretch (polar residues) spans 911-920 (QGRSSNSSEN). S1038 bears the Phosphoserine mark. 2 positions are modified to phosphothreonine: T1040 and T1045. The residue at position 1089 (S1089) is a Phosphoserine. Residues 1119–1134 (QISADSGVSLASASQR) show a composition bias toward polar residues. Over residues 1151 to 1162 (SSSQDSEVSNSS) the composition is skewed to low complexity. The span at 1191-1209 (SRATLSDSEIETNSATSTI) shows a compositional bias: polar residues. T1194 is modified (phosphothreonine). Residues S1196 and S1225 each carry the phosphoserine modification. In terms of domain architecture, Death spans 1295-1370 (GMDQGPQEMI…GLVYSQQINE (76 aa)).

This sequence belongs to the MADD family. Interacts (via death domain) with TNFRSF1A (via death domain). Interacts with PIDD1. Interacts with YWHAZ. Interacts (via death domain) with KIF1B; links the motor KIF1B to Rab3-carrying vesicles in anterograde synaptic vesicle transport. Interacts with KIF1A. Interacts (via uDENN domain) with RAB3A, RAB3B, RAB3C and RAB3D; the GTP-bound form of the Rab proteins is preferred for interaction. As to expression, expressed in all tissues examined with the highest expression in brain.

Its subcellular location is the cell membrane. The protein localises to the cytoplasm. The protein resides in the cell projection. It localises to the axon. Guanyl-nucleotide exchange factor that regulates small GTPases of the Rab family. Converts GDP-bound inactive form of RAB27A and RAB27B to the GTP-bound active forms. Converts GDP-bound inactive form of RAB3A, RAB3C and RAB3D to the GTP-bound active forms, GTPases involved in synaptic vesicle exocytosis and vesicle secretion. Plays a role in synaptic vesicle formation and in vesicle trafficking at the neuromuscular junction. Involved in up-regulating a post-docking step of synaptic exocytosis in central synapses. Probably by binding to the motor proteins KIF1B and KIF1A, mediates motor-dependent transport of GTP-RAB3A-positive vesicles to the presynaptic nerve terminals. Plays a role in TNFA-mediated activation of the MAPK pathway, including ERK1/2. May link TNFRSF1A with MAP kinase activation. May be involved in the regulation of TNFA-induced apoptosis. The sequence is that of MAP kinase-activating death domain protein from Rattus norvegicus (Rat).